Here is a 762-residue protein sequence, read N- to C-terminus: Pyrophosphate-energized vacuolar membrane proton pump (762 aa).

Residues 1–6 are Intravacuolar-facing; it reads MAILGE. A helical membrane pass occupies residues 7 to 33; sequence LGTEILIPVCGVIGIVFAVAQWFIVSK. The Cytoplasmic portion of the chain corresponds to 34-81; it reads VKVTPGAASAAAGAKNGYGDYLIEEEEGLNDHNVVVKCAEIQTAISEG. Residues 82–111 traverse the membrane as a helical segment; it reads ATSFLFTMYQYVGMFMVVFAAIIFLFLGSI. Residues 112 to 131 lie on the Intravacuolar side of the membrane; sequence EGFSTKGQPCTYSKGTCKPA. Cys121 and Cys128 are disulfide-bonded. The helical transmembrane segment at 132 to 159 threads the bilayer; sequence LYTALFSTASFLLGAITSLVSGFLGMKI. Residues 160 to 182 are Cytoplasmic-facing; it reads ATYANARTTLEARKGVGKAFITA. Residues 183-212 form a helical membrane-spanning segment; sequence FRSGAVMGFLLSSSGLVVLYITINVFKMYY. Topologically, residues 213–215 are intravacuolar; that stretch reads GDD. Residues 216–244 traverse the membrane as a helical segment; it reads WEGLFESITGYGLGGSSMALFGRVGGGIY. Over 245-282 the chain is Cytoplasmic; it reads TKAADVGADLVGKVERNIPEDDPRNPAVIADNVGDNVG. Lys246 contacts substrate. 3 residues coordinate Mg(2+): Asp249, Asp253, and Asp279. Residues 283-308 traverse the membrane as a helical segment; it reads DIAGMGSDLFGSYAESSCAALVVASI. Over 309–316 the chain is Intravacuolar; the sequence is SSFGINHD. A helical transmembrane segment spans residues 317 to 342; the sequence is FTAMCYPLLVSSVGIIVCLLTTLFAT. Residues 343–350 are Cytoplasmic-facing; that stretch reads DFFEIKAA. A helical membrane pass occupies residues 351–378; it reads NEIEPALKKQLIISTALMTVGVAVISWL. The Intravacuolar portion of the chain corresponds to 379-397; the sequence is ALPAKFTIFNFGAQKEVSN. Residues 398–421 form a helical membrane-spanning segment; the sequence is WGLFFCVAVGLWAGLIIGFVTEYY. The Cytoplasmic portion of the chain corresponds to 422-443; that stretch reads TSNAYSPVQDVADSCRTGAATN. Residues 444-468 traverse the membrane as a helical segment; sequence VIFGLALGYKSVIIPIFAIAVSIYV. Topologically, residues 469 to 474 are intravacuolar; that stretch reads SFSIAA. The helical transmembrane segment at 475 to 501 threads the bilayer; that stretch reads MYGIAMAALGMLSTMATGLAIDAYGPI. The Cytoplasmic portion of the chain corresponds to 502–530; that stretch reads SDNAGGIAEMAGMSHRIRERTDALDAAGN. Asp503 and Asn530 together coordinate Mg(2+). The helical transmembrane segment at 531 to 559 threads the bilayer; the sequence is TTAAIGKGFAIGSAALVSLALFGAFVSRA. Topologically, residues 560 to 569 are intravacuolar; that stretch reads GVKVVDVLSP. A helical membrane pass occupies residues 570 to 598; the sequence is KVFIGLIVGAMLPYWFSAMTMKSVGSAAL. Residues 599-627 lie on the Cytoplasmic side of the membrane; sequence KMVEEVRRQFNTIPGLMEGTAKPDYATCV. A helical transmembrane segment spans residues 628–656; it reads KISTDASIKEMIPPGALVMLTPLIVGTLF. Residue Gly657 is a topological domain, intravacuolar. Residues 658–685 traverse the membrane as a helical segment; the sequence is VETLSGVLAGALVSGVQIAISASNTGGA. At 686-728 the chain is on the cytoplasmic side; the sequence is WDNAKKYIEAGNSEHARSLGPKGSDCHKAAVIGDTIGDPLKDT. 2 residues coordinate Mg(2+): Asp687 and Asp723. Lys726 lines the substrate pocket. The helical transmembrane segment at 729-754 threads the bilayer; that stretch reads SGPSLNILIKLMAVESLVFAPFFATY. Over 755–762 the chain is Intravacuolar; the sequence is GGLLFKYI.

Belongs to the H(+)-translocating pyrophosphatase (TC 3.A.10) family. K(+)-stimulated subfamily. As to quaternary structure, monomer.

The protein localises to the vacuole membrane. It carries out the reaction diphosphate + H2O + H(+)(in) = 2 phosphate + 2 H(+)(out). Its function is as follows. Contributes to the transtonoplast (from cytosol to vacuole lumen) H(+)-electrochemical potential difference. It establishes a proton gradient of similar and often greater magnitude than the H(+)-ATPase on the same membrane. In Hordeum vulgare (Barley), this protein is Pyrophosphate-energized vacuolar membrane proton pump.